A 285-amino-acid polypeptide reads, in one-letter code: Malectin (285 aa).

Positions 1–26 (MRRVTLHCAARLVIAALWLLVEVCRA) are cleaved as a signal peptide. At 27 to 262 (ESGAQSLAER…TPNPYATDNS (236 aa)) the chain is on the lumenal side. The a carbohydrate site is built by Tyr-71, Tyr-93, Tyr-120, Phe-121, and Asp-190. The tract at residues 209 to 258 (KLQPHPGLEKREEEEEEEEEGEGPEGEKKSASTSPKNPVRSGPRTPNPYA) is disordered. The span at 220–232 (EEEEEEEEEGEGP) shows a compositional bias: acidic residues. The N-linked (GlcNAc...) asparagine glycan is linked to Asn-261. A helical membrane pass occupies residues 263–283 (SLMFPILVAFGVFIPTLFCLC). Over 284–285 (RL) the chain is Cytoplasmic.

Belongs to the malectin family.

It is found in the endoplasmic reticulum membrane. Carbohydrate-binding protein with a strong ligand preference for Glc2-N-glycan. May play a role in the early steps of protein N-glycosylation. The chain is Malectin from Danio rerio (Zebrafish).